The chain runs to 374 residues: Probable carboxylesterase 4, mitochondrial (374 aa).

The N-terminal 52 residues, Met-1–Cys-52, are a transit peptide targeting the mitochondrion. The Involved in the stabilization of the negatively charged intermediate by the formation of the oxyanion hole signature appears at His-135–Gly-137. Residues Ser-219, Asp-317, and His-349 contribute to the active site.

This sequence belongs to the 'GDXG' lipolytic enzyme family. As to expression, expressed in leaves, stems, flowers and siliques.

It is found in the mitochondrion. The enzyme catalyses a carboxylic ester + H2O = an alcohol + a carboxylate + H(+). Functionally, carboxylesterase acting on esters with varying acyl chain length. In Arabidopsis thaliana (Mouse-ear cress), this protein is Probable carboxylesterase 4, mitochondrial (CXE4).